A 191-amino-acid polypeptide reads, in one-letter code: D-glycero-beta-D-manno-heptose-1,7-bisphosphate 7-phosphatase (191 aa).

The Nucleophile role is filled by D11. Residues D11 and D13 each coordinate Mg(2+). Residues 11–13, 19–22, and 53–56 each bind substrate; these read DRD, DHGY, and TNQS. Residue D13 is the Proton donor of the active site. Residues C92, H94, C107, and C109 each coordinate Zn(2+). Residue 110 to 111 coordinates substrate; sequence RK. Mg(2+) contacts are provided by D136 and K137. K137 is a binding site for substrate.

This sequence belongs to the GmhB family. In terms of assembly, monomer. Mg(2+) is required as a cofactor. Requires Zn(2+) as cofactor.

It localises to the cytoplasm. It catalyses the reaction D-glycero-beta-D-manno-heptose 1,7-bisphosphate + H2O = D-glycero-beta-D-manno-heptose 1-phosphate + phosphate. The protein operates within nucleotide-sugar biosynthesis; ADP-L-glycero-beta-D-manno-heptose biosynthesis; ADP-L-glycero-beta-D-manno-heptose from D-glycero-beta-D-manno-heptose 7-phosphate: step 2/4. It functions in the pathway bacterial outer membrane biogenesis; LPS core biosynthesis. Functionally, converts the D-glycero-beta-D-manno-heptose 1,7-bisphosphate intermediate into D-glycero-beta-D-manno-heptose 1-phosphate by removing the phosphate group at the C-7 position. In Escherichia coli O157:H7, this protein is D-glycero-beta-D-manno-heptose-1,7-bisphosphate 7-phosphatase (gmhB).